The following is a 78-amino-acid chain: MSAVVVKEQLEQYISKIERLEEEKSDLAQEVKDIFQDAASHGFDVKAMKAILKLKKLDKNKLAEQDAMLELYRDTLGI.

Belongs to the UPF0335 family.

The polypeptide is UPF0335 protein RP113 (Rickettsia prowazekii (strain Madrid E)).